Here is a 231-residue protein sequence, read N- to C-terminus: Ribose-5-phosphate isomerase A (231 aa).

Substrate is bound by residues 32–35, 85–88, and 98–101; these read TGST, DGAD, and KGGG. Glu107 serves as the catalytic Proton acceptor. Lys125 lines the substrate pocket.

Belongs to the ribose 5-phosphate isomerase family. In terms of assembly, homodimer.

It catalyses the reaction aldehydo-D-ribose 5-phosphate = D-ribulose 5-phosphate. It functions in the pathway carbohydrate degradation; pentose phosphate pathway; D-ribose 5-phosphate from D-ribulose 5-phosphate (non-oxidative stage): step 1/1. In terms of biological role, catalyzes the reversible conversion of ribose-5-phosphate to ribulose 5-phosphate. This chain is Ribose-5-phosphate isomerase A, found in Burkholderia cenocepacia (strain ATCC BAA-245 / DSM 16553 / LMG 16656 / NCTC 13227 / J2315 / CF5610) (Burkholderia cepacia (strain J2315)).